The chain runs to 397 residues: Acetate kinase (397 aa).

N7 contacts Mg(2+). K14 provides a ligand contact to ATP. R91 serves as a coordination point for substrate. The active-site Proton donor/acceptor is the D148. Residues H208 to G212, D283 to R285, and G331 to N335 each bind ATP. Residue E383 participates in Mg(2+) binding.

Belongs to the acetokinase family. As to quaternary structure, homodimer. Mg(2+) serves as cofactor. It depends on Mn(2+) as a cofactor.

The protein localises to the cytoplasm. It carries out the reaction acetate + ATP = acetyl phosphate + ADP. It functions in the pathway metabolic intermediate biosynthesis; acetyl-CoA biosynthesis; acetyl-CoA from acetate: step 1/2. Its function is as follows. Catalyzes the formation of acetyl phosphate from acetate and ATP. Can also catalyze the reverse reaction. In Heliobacterium modesticaldum (strain ATCC 51547 / Ice1), this protein is Acetate kinase.